The chain runs to 1434 residues: MQNNKNYTEKFITDKVTRRDYSKIKSNFEGPNLLEIQVESFKRFMEKDLKEVISGIFPLKSPQGKYTLAFKGLKIKQPTKDESACRDEGKTFETPIYIDLELTDNYTGEVKRAQRNAKTGEDGIYLGAIPKMTEKGTFVINGIEKFVISQIVRSPGIYVLGKSSIKLNGSRKRLFEGKICEIYPSKGTLMLGYIPKDRHNIQIVARDSSGDNAQTFSITTLLKAFGLTSAEILKIFNNEKEIRESLEVEKYSPEYIFENSQENEIIFKIYSDAHDIHEKADRRESNNKLREEYIEQGSPLLSKLKELIFDYVEKSDEIDALLHENKDVEDANFIKNNKKLYDEREEIINCIISEKAAKDIVELLGINIKNVETLRHLGKASYQLALQQHFFNKRLYDISSAGRYKFEKKLLLSERLYQKVIARDIIDKKNNILIPKDTLITKEHIELIKKESRDKNIKWTRKINLLPIALETEIEQFLEYESIAVYKDNDLRDETTEIVGLAPGCKLQTLTVADLVATTSYIYNLNYEIGEFDDIDHLGNKRLKLIHELLRARIATSMARIEKFINEKLAISDGSSNNITNVNDKGIDTELDREVEESDMSDEEKKKAISVKSIINTKQFQSLVKDFFNSHQLIQFIDQQNPLAELTNKRRISAMGPGGISREDPNLDIRDVHHSHYSRICPIETPEGMNIGLIMSLASLAKVDENGFIVAPYYVVEDGVVKEECKYLTAHEDDNYIIAESSVQLDENKRILDEQVVARYRGSTGLFSPHEVDFIDIVPKQVVSIAASAIPFIENDDGARALMGSNMQRQATPLIKPYAPIVGTGTEFKIAHDSGMAVVAKNDGVVEFVDSQKIVIKNDNDKLDEYKLIKYRKSNQDTCNNQIPIVKIGQKVHKSETIGDGPAMQNGELALGRNILVGYTTWRGYNFEDAIIISERLVDQDVFTSIHIDEHTIQCMKTKNGDEEITRDMPNVSDTAKRFLDNQGIVLVGAEVHEGDVLVGKTTPRGNVETAPEDRLLQTIFGDKSKTVKDSSLKVKHGQEGIVAAVKRIKSTDENGSELPDDVIEIIKVYIVQKRKIQVGDKMAGRHGNKGIVSKVVPIQDMPFLKDGTPLDIMLNPLGVPSRMNIGQILELHLGYAAAEIGKKQLIQIAIDQLGYEKYISLFGINEIIAKKLYEKITNLIKHKQAKQPKDIDLIDITIVLKELGLSYDDIGIKISTPVFDGANHDDIVDIMNEANIDIENNKGKQVLYDGRTGEAFDGLISVGLTYMLKLDHMVDDKIHSRSVGPYSKITQQPLGGKSQNGGQRFGEMEVWALEAYGAAYNLLEILTIKSDDVQGRNQAYNAIIKGHDVVADGMPESFKLLTKQMQGLGLCITVETKDDRMIDINEYTLNQNRLNNDDDEVIFDESIKEINENNQQVFNTDFNDNDYDDEENF.

It belongs to the RNA polymerase beta chain family. As to quaternary structure, the RNAP catalytic core consists of 2 alpha, 1 beta, 1 beta' and 1 omega subunit. When a sigma factor is associated with the core the holoenzyme is formed, which can initiate transcription.

It carries out the reaction RNA(n) + a ribonucleoside 5'-triphosphate = RNA(n+1) + diphosphate. Functionally, DNA-dependent RNA polymerase catalyzes the transcription of DNA into RNA using the four ribonucleoside triphosphates as substrates. In Ureaplasma urealyticum serovar 10 (strain ATCC 33699 / Western), this protein is DNA-directed RNA polymerase subunit beta.